Here is a 249-residue protein sequence, read N- to C-terminus: tRNA (guanine-N(1)-)-methyltransferase (249 aa).

Residues G113 and 133 to 138 each bind S-adenosyl-L-methionine; that span reads IGDYVL.

Belongs to the RNA methyltransferase TrmD family. In terms of assembly, homodimer.

It localises to the cytoplasm. The enzyme catalyses guanosine(37) in tRNA + S-adenosyl-L-methionine = N(1)-methylguanosine(37) in tRNA + S-adenosyl-L-homocysteine + H(+). In terms of biological role, specifically methylates guanosine-37 in various tRNAs. This is tRNA (guanine-N(1)-)-methyltransferase from Aeromonas hydrophila subsp. hydrophila (strain ATCC 7966 / DSM 30187 / BCRC 13018 / CCUG 14551 / JCM 1027 / KCTC 2358 / NCIMB 9240 / NCTC 8049).